Consider the following 89-residue polypeptide: Elongation factor 1-beta (89 aa).

It belongs to the EF-1-beta/EF-1-delta family.

Its function is as follows. Promotes the exchange of GDP for GTP in EF-1-alpha/GDP, thus allowing the regeneration of EF-1-alpha/GTP that could then be used to form the ternary complex EF-1-alpha/GTP/AAtRNA. This Methanothermobacter thermautotrophicus (strain ATCC 29096 / DSM 1053 / JCM 10044 / NBRC 100330 / Delta H) (Methanobacterium thermoautotrophicum) protein is Elongation factor 1-beta (ef1b).